A 440-amino-acid polypeptide reads, in one-letter code: Serine/threonine-protein kinase 2 (440 aa).

A Protein kinase domain is found at 85 to 440 (NDDFYHISTG…FSNWINGESC (356 aa)). ATP-binding positions include 91 to 99 (ISTGGYGIV) and lysine 115. The active-site Proton acceptor is the aspartate 306.

The protein belongs to the protein kinase superfamily. Ser/Thr protein kinase family. Poxviruses subfamily. Post-translationally, phosphorylated in vivo. Autophosphorylated in vitro.

The protein resides in the host endoplasmic reticulum. It localises to the host endoplasmic reticulum-Golgi intermediate compartment. It catalyses the reaction L-seryl-[protein] + ATP = O-phospho-L-seryl-[protein] + ADP + H(+). The catalysed reaction is L-threonyl-[protein] + ATP = O-phospho-L-threonyl-[protein] + ADP + H(+). Functionally, essential serine-protein kinase involved in the early stage of virion morphogenesis. In Sus scrofa (Pig), this protein is Serine/threonine-protein kinase 2 (OPG054).